Here is a 37-residue protein sequence, read N- to C-terminus: uncharacterized protein (37 aa).

A helical membrane pass occupies residues 17–37 (TFVLIVVLFILLIIVGAAFIC).

This sequence belongs to the SscA family.

Its subcellular location is the membrane. This is an uncharacterized protein from Bacillus subtilis (strain 168).